The sequence spans 417 residues: Serine hydroxymethyltransferase (417 aa).

At Lys54 the chain carries N6-acetyllysine. (6S)-5,6,7,8-tetrahydrofolate-binding positions include Leu121 and 125–127 (GHL). Lys229 bears the N6-(pyridoxal phosphate)lysine mark. Lys250, Lys285, and Lys354 each carry N6-acetyllysine. 355 to 357 (SPF) lines the (6S)-5,6,7,8-tetrahydrofolate pocket. Lys375 is modified (N6-acetyllysine).

This sequence belongs to the SHMT family. In terms of assembly, homodimer. Pyridoxal 5'-phosphate is required as a cofactor.

The protein resides in the cytoplasm. The enzyme catalyses (6R)-5,10-methylene-5,6,7,8-tetrahydrofolate + glycine + H2O = (6S)-5,6,7,8-tetrahydrofolate + L-serine. The protein operates within one-carbon metabolism; tetrahydrofolate interconversion. It participates in amino-acid biosynthesis; glycine biosynthesis; glycine from L-serine: step 1/1. Functionally, catalyzes the reversible interconversion of serine and glycine with tetrahydrofolate (THF) serving as the one-carbon carrier. This reaction serves as the major source of one-carbon groups required for the biosynthesis of purines, thymidylate, methionine, and other important biomolecules. Also exhibits THF-independent aldolase activity toward beta-hydroxyamino acids, producing glycine and aldehydes, via a retro-aldol mechanism. The polypeptide is Serine hydroxymethyltransferase (Shigella dysenteriae serotype 1 (strain Sd197)).